The primary structure comprises 122 residues: UPF0102 protein RL0336 (122 aa).

This sequence belongs to the UPF0102 family.

The chain is UPF0102 protein RL0336 from Rhizobium johnstonii (strain DSM 114642 / LMG 32736 / 3841) (Rhizobium leguminosarum bv. viciae).